Consider the following 505-residue polypeptide: Deoxyguanosinetriphosphate triphosphohydrolase (505 aa).

Positions 66 to 273 (RLTHSLEVQQ…MEAADDISYC (208 aa)) constitute an HD domain.

The protein belongs to the dGTPase family. Type 1 subfamily. Homotetramer. Mg(2+) is required as a cofactor.

It carries out the reaction dGTP + H2O = 2'-deoxyguanosine + triphosphate + H(+). In terms of biological role, dGTPase preferentially hydrolyzes dGTP over the other canonical NTPs. In Yersinia enterocolitica serotype O:8 / biotype 1B (strain NCTC 13174 / 8081), this protein is Deoxyguanosinetriphosphate triphosphohydrolase.